The sequence spans 358 residues: Probable translocation protein Y4yK (358 aa).

Belongs to the FliN/MopA/SpaO family.

Its function is as follows. Could be involved in the secretion of an unknown factor. The protein is Probable translocation protein Y4yK of Sinorhizobium fredii (strain NBRC 101917 / NGR234).